The following is a 375-amino-acid chain: Chaperone protein DnaJ (375 aa).

Positions 5–69 constitute a J domain; it reads DYYEILGVSK…QKRAAYDQYG (65 aa). The CR-type zinc finger occupies 130–208; the sequence is GVTKEIRIPT…CHGHGRVEKA (79 aa). 8 residues coordinate Zn(2+): cysteine 143, cysteine 146, cysteine 160, cysteine 163, cysteine 182, cysteine 185, cysteine 196, and cysteine 199. 4 CXXCXGXG motif repeats span residues 143 to 150, 160 to 167, 182 to 189, and 196 to 203; these read CGVCHGSG, CPTCHGQG, CPHCHGRG, and CNSCHGHG.

The protein belongs to the DnaJ family. In terms of assembly, homodimer. Requires Zn(2+) as cofactor.

The protein resides in the cytoplasm. In terms of biological role, participates actively in the response to hyperosmotic and heat shock by preventing the aggregation of stress-denatured proteins and by disaggregating proteins, also in an autonomous, DnaK-independent fashion. Unfolded proteins bind initially to DnaJ; upon interaction with the DnaJ-bound protein, DnaK hydrolyzes its bound ATP, resulting in the formation of a stable complex. GrpE releases ADP from DnaK; ATP binding to DnaK triggers the release of the substrate protein, thus completing the reaction cycle. Several rounds of ATP-dependent interactions between DnaJ, DnaK and GrpE are required for fully efficient folding. Also involved, together with DnaK and GrpE, in the DNA replication of plasmids through activation of initiation proteins. This Serratia proteamaculans (strain 568) protein is Chaperone protein DnaJ.